Here is a 250-residue protein sequence, read N- to C-terminus: Cell division protein ZapD (250 aa).

This sequence belongs to the ZapD family. As to quaternary structure, interacts with FtsZ.

It localises to the cytoplasm. Cell division factor that enhances FtsZ-ring assembly. Directly interacts with FtsZ and promotes bundling of FtsZ protofilaments, with a reduction in FtsZ GTPase activity. The protein is Cell division protein ZapD of Pectobacterium carotovorum subsp. carotovorum (strain PC1).